Consider the following 314-residue polypeptide: Malate dehydrogenase (314 aa).

NAD(+)-binding positions include 13–18 (GGGQIG) and Asp37. Positions 88 and 94 each coordinate substrate. Residues Asn101 and 124-126 (VAN) contribute to the NAD(+) site. 2 residues coordinate substrate: Asn126 and Arg157. His181 acts as the Proton acceptor in catalysis.

The protein belongs to the LDH/MDH superfamily. MDH type 3 family.

It carries out the reaction (S)-malate + NAD(+) = oxaloacetate + NADH + H(+). In terms of biological role, catalyzes the reversible oxidation of malate to oxaloacetate. This Myxococcus xanthus protein is Malate dehydrogenase.